The sequence spans 86 residues: Anti-adapter protein IraP (86 aa).

Residues Met-1 to Arg-38 are a coiled coil.

This sequence belongs to the IraP family. As to quaternary structure, interacts with RssB.

The protein resides in the cytoplasm. Its function is as follows. Inhibits RpoS proteolysis by regulating RssB activity, thereby increasing the stability of the sigma stress factor RpoS especially during phosphate starvation, but also in stationary phase and during nitrogen starvation. Its effect on RpoS stability is due to its interaction with RssB, which probably blocks the interaction of RssB with RpoS, and the consequent delivery of the RssB-RpoS complex to the ClpXP protein degradation pathway. The sequence is that of Anti-adapter protein IraP from Klebsiella pneumoniae (strain 342).